The following is a 321-amino-acid chain: Peroxidase 28 (321 aa).

The N-terminal stretch at 1-21 (MKIATFSVLLLLLFIFPVALA) is a signal peptide. 4 disulfide bridges follow: cysteine 32/cysteine 111, cysteine 65/cysteine 70, cysteine 117/cysteine 317, and cysteine 196/cysteine 228. The active-site Proton acceptor is the histidine 63. Residues aspartate 64, valine 67, glycine 69, aspartate 71, and serine 73 each contribute to the Ca(2+) site. Residue proline 159 participates in substrate binding. Residue histidine 189 participates in heme b binding. Threonine 190 contributes to the Ca(2+) binding site. Positions 238, 244, and 249 each coordinate Ca(2+).

It belongs to the peroxidase family. Classical plant (class III) peroxidase subfamily. Heme b is required as a cofactor. The cofactor is Ca(2+).

It localises to the secreted. It catalyses the reaction 2 a phenolic donor + H2O2 = 2 a phenolic radical donor + 2 H2O. Its function is as follows. Removal of H(2)O(2), oxidation of toxic reductants, biosynthesis and degradation of lignin, suberization, auxin catabolism, response to environmental stresses such as wounding, pathogen attack and oxidative stress. These functions might be dependent on each isozyme/isoform in each plant tissue. The chain is Peroxidase 28 (PER28) from Arabidopsis thaliana (Mouse-ear cress).